Consider the following 82-residue polypeptide: Acyl carrier protein (82 aa).

The Carrier domain occupies 4-79 (PEMESRLKKI…DALNYIEQKL (76 aa)). Residue S39 is modified to O-(pantetheine 4'-phosphoryl)serine.

This sequence belongs to the acyl carrier protein (ACP) family. 4'-phosphopantetheine is transferred from CoA to a specific serine of apo-ACP by AcpS. This modification is essential for activity because fatty acids are bound in thioester linkage to the sulfhydryl of the prosthetic group.

Its subcellular location is the cytoplasm. It functions in the pathway lipid metabolism; fatty acid biosynthesis. Functionally, carrier of the growing fatty acid chain in fatty acid biosynthesis. This is Acyl carrier protein from Roseiflexus sp. (strain RS-1).